We begin with the raw amino-acid sequence, 288 residues long: Nucleotide-binding protein Pcar_1935 (288 aa).

11–18 is a binding site for ATP; that stretch reads GLSGSGKT. 62-65 is a GTP binding site; it reads DVRN.

Belongs to the RapZ-like family.

Functionally, displays ATPase and GTPase activities. The protein is Nucleotide-binding protein Pcar_1935 of Syntrophotalea carbinolica (strain DSM 2380 / NBRC 103641 / GraBd1) (Pelobacter carbinolicus).